Consider the following 326-residue polypeptide: Vitamin B12 import system permease protein BtuC (326 aa).

9 helical membrane passes run isoleucine 13–glutamate 35, isoleucine 55–methionine 77, leucine 90–leucine 107, glutamine 111–leucine 133, leucine 146–threonine 168, tryptophan 188–cysteine 205, methionine 242–leucine 264, valine 274–leucine 296, and leucine 303–leucine 322.

This sequence belongs to the binding-protein-dependent transport system permease family. FecCD subfamily. The complex is composed of two ATP-binding proteins (BtuD), two transmembrane proteins (BtuC) and a solute-binding protein (BtuF).

The protein resides in the cell inner membrane. In terms of biological role, part of the ABC transporter complex BtuCDF involved in vitamin B12 import. Involved in the translocation of the substrate across the membrane. This Shigella flexneri protein is Vitamin B12 import system permease protein BtuC.